The following is a 482-amino-acid chain: MSGVIYYKFKSQKDPSRITFDGTIGMSVFDVKREIIMQKKLGNGLDFDLLLYNANSNEEYDDDTFIIPRSTSVIVRRVPAQKSGKGTAARYVSGAPKTTGARSDSVKRPVPMLQKKAPITSGESNINKSPSSSEDAAIQQMFQVSSDQWRETQDKMASATPIYKPNQRRIAASVPDKPPPPGYICYRCGQKGHWIQACPTNADPNYDGKPRVKRTTGIPRSFLKNVERPAEGDAANIMINAEGDYVVVQPDVASWETYQSRKAALTANDVYKMQPPNISLACTLCKKLARNACRTPCCDKLFCEECIQTALLDSDFECPNCHRKDVLLDTLNPDYQKQREIEAVVKSVLGSNSKNSDKVGTSDDNNTPMSEKRKREDDDANGPNKFAARSSAVFSKATAEPAFKSAMAIPDMPSMPHVQGFPAPFPPFMMPGLPQMPPMMMNAIAGQVYHNNRNPPRTNSRPSNASVPPPSSLHKNPPTKTN.

Positions 5–79 (IYYKFKSQKD…STSVIVRRVP (75 aa)) constitute a DWNN domain. The tract at residues 86 to 108 (GTAARYVSGAPKTTGARSDSVKR) is disordered. The CCHC-type zinc-finger motif lies at 183–200 (YICYRCGQKGHWIQACPT). Residues 282–322 (CTLCKKLARNACRTPCCDKLFCEECIQTALLDSDFECPNCH) form an RING-type; degenerate zinc finger. 2 disordered regions span residues 346-393 (KSVL…SSAV) and 447-482 (QVYH…TKTN). Residues 451–466 (NNRNPPRTNSRPSNAS) are compositionally biased toward low complexity.

Its subcellular location is the nucleus. This is an uncharacterized protein from Schizosaccharomyces pombe (strain 972 / ATCC 24843) (Fission yeast).